The primary structure comprises 363 residues: UDP-N-acetylglucosamine--N-acetylmuramyl-(pentapeptide) pyrophosphoryl-undecaprenol N-acetylglucosamine transferase (363 aa).

Residues 10–12 (TGG), Asn124, Ser195, Ile250, and Gln295 each bind UDP-N-acetyl-alpha-D-glucosamine.

The protein belongs to the glycosyltransferase 28 family. MurG subfamily.

It localises to the cell membrane. It catalyses the reaction di-trans,octa-cis-undecaprenyl diphospho-N-acetyl-alpha-D-muramoyl-L-alanyl-D-glutamyl-meso-2,6-diaminopimeloyl-D-alanyl-D-alanine + UDP-N-acetyl-alpha-D-glucosamine = di-trans,octa-cis-undecaprenyl diphospho-[N-acetyl-alpha-D-glucosaminyl-(1-&gt;4)]-N-acetyl-alpha-D-muramoyl-L-alanyl-D-glutamyl-meso-2,6-diaminopimeloyl-D-alanyl-D-alanine + UDP + H(+). The protein operates within cell wall biogenesis; peptidoglycan biosynthesis. Its function is as follows. Cell wall formation. Catalyzes the transfer of a GlcNAc subunit on undecaprenyl-pyrophosphoryl-MurNAc-pentapeptide (lipid intermediate I) to form undecaprenyl-pyrophosphoryl-MurNAc-(pentapeptide)GlcNAc (lipid intermediate II). This Listeria monocytogenes serotype 4b (strain CLIP80459) protein is UDP-N-acetylglucosamine--N-acetylmuramyl-(pentapeptide) pyrophosphoryl-undecaprenol N-acetylglucosamine transferase.